The following is a 397-amino-acid chain: MACMLCCSPLPALSSPATGGAAVVGFSSSSRRKAAHVHPAVAVKDHDLSSSSPAACGDEGGGAVVIEEEAHPSMMMSVAAPAMKKKAVAARWRPPRLVVPAVAGADEAMAAAAAVKAAKEKEEEEAMEVEGEGFWVASRRGLRHAMEDGYGVITHKIEGHSQMAFYGVYDGHGGRAAVDFVAGRLGNNVVAAAEKQRLSEKASSPAAADHVAAAIRAAYLATDSEFLSQGTRGGACAATALVIDGDLYVANLGDCRAVISRHGAAAALTSDHTPARDDERSRIESSGGYVSCGSNGVWRVQDCLAVTRSFGDGGLKRWVVAEPEVSRTPLAGAGCEFLVIASDGLWNKVSNQEAVDAVAAGHYSVDSCRRLVDMARRRGSRDDVTVMVVDLKRFLNC.

The 259-residue stretch at 133 to 391 (GFWVASRRGL…DDVTVMVVDL (259 aa)) folds into the PPM-type phosphatase domain. Positions 170, 171, 343, and 382 each coordinate Mn(2+).

This sequence belongs to the PP2C family. Mg(2+) is required as a cofactor. Requires Mn(2+) as cofactor.

It carries out the reaction O-phospho-L-seryl-[protein] + H2O = L-seryl-[protein] + phosphate. The catalysed reaction is O-phospho-L-threonyl-[protein] + H2O = L-threonyl-[protein] + phosphate. In Oryza sativa subsp. japonica (Rice), this protein is Probable protein phosphatase 2C 74.